We begin with the raw amino-acid sequence, 158 residues long: MTFKGFQMNEEKLEIGIQDASSENCQLQESQKQLLQEAEVWKEQVSELNKQKITFEDSKVHAEQVLNDKENHIETLTERLLKIKDQAAVLEEDITDDGNLELEMNSELKDGAYLDNPPKGALKKLIHAAKLNASLTTLEGERNQFIFSYLKLIKPGRA.

Residues Gln-26 to Asp-96 are a coiled coil.

It belongs to the cTAGE family. As to expression, expressed in normal tissues including colon, mammary gland, ovary, placenta, stomach and testis, as well as several fetal tissues.

Its function is as follows. Tumor-associated antigen. The protein is Putative cTAGE family member 3 (CTAGE3P) of Homo sapiens (Human).